Consider the following 529-residue polypeptide: GTPase Obg (529 aa).

An Obg domain is found at A2 to I159. The OBG-type G domain maps to A160–K343. Residues G166–S173, F191–I195, D212–G215, N295–D298, and S324–T326 each bind GTP. S173 and T193 together coordinate Mg(2+). Residues P363–P447 enclose the OCT domain. Positions G461 to S529 are disordered. Residues T462–A502 show a composition bias toward basic and acidic residues.

It belongs to the TRAFAC class OBG-HflX-like GTPase superfamily. OBG GTPase family. As to quaternary structure, monomer. Requires Mg(2+) as cofactor.

It is found in the cytoplasm. In terms of biological role, an essential GTPase which binds GTP, GDP and possibly (p)ppGpp with moderate affinity, with high nucleotide exchange rates and a fairly low GTP hydrolysis rate. Plays a role in control of the cell cycle, stress response, ribosome biogenesis and in those bacteria that undergo differentiation, in morphogenesis control. The chain is GTPase Obg from Pseudarthrobacter chlorophenolicus (strain ATCC 700700 / DSM 12829 / CIP 107037 / JCM 12360 / KCTC 9906 / NCIMB 13794 / A6) (Arthrobacter chlorophenolicus).